The chain runs to 591 residues: Probable LRR receptor-like serine/threonine-protein kinase At1g69990 (591 aa).

An N-terminal signal peptide occupies residues 1–18 (MKTISIFFVIILMSSSHA). Topologically, residues 19-218 (EDDVLCLKGF…GKNLTIIVTA (200 aa)) are extracellular. Residue Asn-46 is glycosylated (N-linked (GlcNAc...) asparagine). 5 LRR repeats span residues 66–88 (RILS…LKLC), 90–111 (SLQS…QICS), 115–137 (YLVT…IVDC), 139–162 (FLNS…TRLN), and 163–185 (RLQR…LSHY). Asn-211 carries N-linked (GlcNAc...) asparagine glycosylation. Residues 219-239 (GVIGAVGSLCVGFGMFWWFFI) traverse the membrane as a helical segment. Residues 240-591 (RDRRKMNNYG…LIFNKQEHLK (352 aa)) lie on the Cytoplasmic side of the membrane. Thr-292 carries the phosphothreonine modification. Positions 295 to 573 (FDSGNIVVSS…KNLGDQHGFF (279 aa)) constitute a Protein kinase domain. ATP contacts are provided by residues 301–309 (VVSSRSGVS) and Lys-323. Ser-378 carries the post-translational modification Phosphoserine. Residue Thr-389 is modified to Phosphothreonine. Phosphotyrosine is present on Tyr-463. Ser-465 carries the post-translational modification Phosphoserine. Thr-466 is modified (phosphothreonine). Ser-470 carries the post-translational modification Phosphoserine.

Belongs to the protein kinase superfamily. Ser/Thr protein kinase family.

It localises to the membrane. It catalyses the reaction L-seryl-[protein] + ATP = O-phospho-L-seryl-[protein] + ADP + H(+). The catalysed reaction is L-threonyl-[protein] + ATP = O-phospho-L-threonyl-[protein] + ADP + H(+). This Arabidopsis thaliana (Mouse-ear cress) protein is Probable LRR receptor-like serine/threonine-protein kinase At1g69990.